A 142-amino-acid chain; its full sequence is Hemoglobin subunit alpha-4 (142 aa).

Ser1 is modified (N-acetylserine). Residues 1 to 142 (SLSAKDKANV…LALALAEKYR (142 aa)) form the Globin domain. His59 contributes to the O2 binding site. Residue His88 participates in heme b binding.

It belongs to the globin family. As to quaternary structure, heterotetramer of two alpha chains and two beta chains. Red blood cells.

Its function is as follows. Involved in oxygen transport from gills to the various peripheral tissues. This chain is Hemoglobin subunit alpha-4 (hba4), found in Oncorhynchus mykiss (Rainbow trout).